Consider the following 432-residue polypeptide: Adenylosuccinate synthetase (432 aa).

Residues 12 to 18 (GDEGKGK) and 40 to 42 (GHT) each bind GTP. The active-site Proton acceptor is the Asp-13. Mg(2+) contacts are provided by Asp-13 and Gly-40. IMP is bound by residues 13–16 (DEGK), 38–41 (NAGH), Thr-132, Arg-146, Gln-226, Thr-241, and Arg-305. Residue His-41 is the Proton donor of the active site. Substrate is bound at residue 301–307 (VVTGRKR). GTP is bound by residues Arg-307, 333-335 (KLD), and 415-417 (STS).

It belongs to the adenylosuccinate synthetase family. Homodimer. It depends on Mg(2+) as a cofactor.

Its subcellular location is the cytoplasm. The catalysed reaction is IMP + L-aspartate + GTP = N(6)-(1,2-dicarboxyethyl)-AMP + GDP + phosphate + 2 H(+). It participates in purine metabolism; AMP biosynthesis via de novo pathway; AMP from IMP: step 1/2. Plays an important role in the de novo pathway of purine nucleotide biosynthesis. Catalyzes the first committed step in the biosynthesis of AMP from IMP. The sequence is that of Adenylosuccinate synthetase from Mesorhizobium japonicum (strain LMG 29417 / CECT 9101 / MAFF 303099) (Mesorhizobium loti (strain MAFF 303099)).